The sequence spans 533 residues: Flavin-containing monooxygenase 5 (533 aa).

The residue at position 5 (Arg5) is a Dimethylated arginine. Residues 10-14 (GGGVS), Glu33, and 41-42 (LW) each bind FAD. At Ser54 the chain carries Phosphoserine. The residue at position 56 (Tyr56) is a Phosphotyrosine. At Ser58 the chain carries Phosphoserine. 62-63 (NT) is a binding site for FAD. 196–199 (SGGD) is an NADP(+) binding site. A Phosphoserine modification is found at Ser280. Residue Thr284 is modified to Phosphothreonine. Position 401 is a phosphoserine (Ser401). Residues 513–533 (TMTIGKFMLALAFFAIIIAYF) traverse the membrane as a helical segment.

Belongs to the FMO family. FAD is required as a cofactor. In terms of tissue distribution, expressed in fetal and adult liver.

It localises to the microsome membrane. Its subcellular location is the endoplasmic reticulum membrane. The catalysed reaction is N,N-dimethylaniline + NADPH + O2 + H(+) = N,N-dimethylaniline N-oxide + NADP(+) + H2O. It catalyses the reaction NADPH + O2 + H(+) = H2O2 + NADP(+). The enzyme catalyses heptan-2-one + NADPH + O2 + H(+) = pentyl acetate + NADP(+) + H2O. It carries out the reaction octan-3-one + NADPH + O2 + H(+) = pentyl propanoate + NADP(+) + H2O. The catalysed reaction is octan-3-one + NADPH + O2 + H(+) = ethyl hexanoate + NADP(+) + H2O. It catalyses the reaction hexan-3-one + NADPH + O2 + H(+) = ethyl butanoate + NADP(+) + H2O. The enzyme catalyses hexan-3-one + NADPH + O2 + H(+) = propyl propanoate + NADP(+) + H2O. It carries out the reaction heptan-4-one + NADPH + O2 + H(+) = propyl butanoate + NADP(+) + H2O. The catalysed reaction is (2E)-geranial + NADPH + O2 + H(+) = (1E)-2,6-dimethylhepta-1,5-dien-1-yl formate + NADP(+) + H2O. It catalyses the reaction sulcatone + NADPH + O2 + H(+) = 4-methylpent-3-en-1-yl acetate + NADP(+) + H2O. In terms of biological role, acts as a Baeyer-Villiger monooxygenase on a broad range of substrates. Catalyzes the insertion of an oxygen atom into a carbon-carbon bond adjacent to a carbonyl, which converts ketones to esters. Active on diverse carbonyl compounds, whereas soft nucleophiles are mostly non- or poorly reactive. In contrast with other forms of FMO it is non- or poorly active on 'classical' substrates such as drugs, pesticides, and dietary components containing soft nucleophilic heteroatoms. Able to oxidize drug molecules bearing a carbonyl group on an aliphatic chain, such as nabumetone and pentoxifylline. Also, in the absence of substrates, shows slow but yet significant NADPH oxidase activity. Acts as a positive modulator of cholesterol biosynthesis as well as glucose homeostasis, promoting metabolic aging via pleiotropic effects. This Homo sapiens (Human) protein is Flavin-containing monooxygenase 5.